We begin with the raw amino-acid sequence, 160 residues long: 2-C-methyl-D-erythritol 2,4-cyclodiphosphate synthase (160 aa).

A divalent metal cation contacts are provided by Asp11 and His13. Residues 11 to 13 (DVH) and 37 to 38 (HS) each bind 4-CDP-2-C-methyl-D-erythritol 2-phosphate. His45 is an a divalent metal cation binding site. Residues 59–61 (DIG), 64–68 (FPDTD), 103–109 (AQAPKMA), 135–138 (TTTE), Phe142, and Arg145 contribute to the 4-CDP-2-C-methyl-D-erythritol 2-phosphate site.

The protein belongs to the IspF family. Homotrimer. The cofactor is a divalent metal cation.

It catalyses the reaction 4-CDP-2-C-methyl-D-erythritol 2-phosphate = 2-C-methyl-D-erythritol 2,4-cyclic diphosphate + CMP. It functions in the pathway isoprenoid biosynthesis; isopentenyl diphosphate biosynthesis via DXP pathway; isopentenyl diphosphate from 1-deoxy-D-xylulose 5-phosphate: step 4/6. Its function is as follows. Involved in the biosynthesis of isopentenyl diphosphate (IPP) and dimethylallyl diphosphate (DMAPP), two major building blocks of isoprenoid compounds. Catalyzes the conversion of 4-diphosphocytidyl-2-C-methyl-D-erythritol 2-phosphate (CDP-ME2P) to 2-C-methyl-D-erythritol 2,4-cyclodiphosphate (ME-CPP) with a corresponding release of cytidine 5-monophosphate (CMP). The polypeptide is 2-C-methyl-D-erythritol 2,4-cyclodiphosphate synthase (Thioalkalivibrio sulfidiphilus (strain HL-EbGR7)).